Reading from the N-terminus, the 143-residue chain is Anti-sigma F factor (143 aa).

It belongs to the anti-sigma-factor family.

It carries out the reaction L-seryl-[protein] + ATP = O-phospho-L-seryl-[protein] + ADP + H(+). The catalysed reaction is L-threonyl-[protein] + ATP = O-phospho-L-threonyl-[protein] + ADP + H(+). Binds to sigma F and blocks its ability to form an RNA polymerase holoenzyme (E-sigma F). Phosphorylates SpoIIAA on a serine residue. This phosphorylation may enable SpoIIAA to act as an anti-anti-sigma factor that counteracts SpoIIAB and thus releases sigma F from inhibition. The polypeptide is Anti-sigma F factor (Caldanaerobacter subterraneus subsp. tengcongensis (strain DSM 15242 / JCM 11007 / NBRC 100824 / MB4) (Thermoanaerobacter tengcongensis)).